The sequence spans 166 residues: Phosphopantetheine adenylyltransferase (166 aa).

S10 lines the substrate pocket. ATP-binding positions include 10-11 (SF) and H18. Substrate is bound by residues K42, A79, and R93. Residues 94 to 96 (GLR), E104, and 129 to 135 (VRPITAT) contribute to the ATP site.

It belongs to the bacterial CoaD family. Homohexamer. Mg(2+) serves as cofactor.

It localises to the cytoplasm. The catalysed reaction is (R)-4'-phosphopantetheine + ATP + H(+) = 3'-dephospho-CoA + diphosphate. It functions in the pathway cofactor biosynthesis; coenzyme A biosynthesis; CoA from (R)-pantothenate: step 4/5. Its function is as follows. Reversibly transfers an adenylyl group from ATP to 4'-phosphopantetheine, yielding dephospho-CoA (dPCoA) and pyrophosphate. This Methylobacterium nodulans (strain LMG 21967 / CNCM I-2342 / ORS 2060) protein is Phosphopantetheine adenylyltransferase.